We begin with the raw amino-acid sequence, 95 residues long: Protein translocase subunit SecE (95 aa).

The tract at residues 1–35 (MTDAVGSIDMPDAEDEAPESKKKSRKGGKRGKKGP) is disordered. Positions 22 to 35 (KKSRKGGKRGKKGP) are enriched in basic residues. The chain crosses the membrane as a helical span at residues 67–87 (VVIVFVVVMIGLVTVLDIGFA).

It belongs to the SecE/SEC61-gamma family. In terms of assembly, component of the Sec protein translocase complex. Heterotrimer consisting of SecY, SecE and SecG subunits. The heterotrimers can form oligomers, although 1 heterotrimer is thought to be able to translocate proteins. Interacts with the ribosome. Interacts with SecDF, and other proteins may be involved. Interacts with SecA.

Its subcellular location is the cell membrane. In terms of biological role, essential subunit of the Sec protein translocation channel SecYEG. Clamps together the 2 halves of SecY. May contact the channel plug during translocation. The chain is Protein translocase subunit SecE from Streptomyces griseus.